A 152-amino-acid chain; its full sequence is MRKLLISLALAIPVFAVDHNLLQKGYEVYKKHCSACHIERATPEQIKKFRMMAMRGEKLPIAAPPMNEVSARVKKFYPGELEFITFVKDYITNPSREKGVCMPMAFKLFGVMPPIGKALSEEEKEAVAYWLYHNYKESWKEMMRKMHGKMMH.

Positions 1–16 (MRKLLISLALAIPVFA) are cleaved as a signal peptide. The Cytochrome c domain maps to 20-135 (NLLQKGYEVY…AVAYWLYHNY (116 aa)). The heme c site is built by cysteine 33, cysteine 36, and histidine 37.

This is an uncharacterized protein from Aquifex aeolicus (strain VF5).